Consider the following 698-residue polypeptide: Elongation factor G (698 aa).

Residues 10–285 enclose the tr-type G domain; that stretch reads ASTRNIGIMA…AVVDFLPNPL (276 aa). GTP is bound by residues 19 to 26, 83 to 87, and 137 to 140; these read AHIDAGKT, DTPGH, and NKMD.

The protein belongs to the TRAFAC class translation factor GTPase superfamily. Classic translation factor GTPase family. EF-G/EF-2 subfamily.

The protein resides in the cytoplasm. Its function is as follows. Catalyzes the GTP-dependent ribosomal translocation step during translation elongation. During this step, the ribosome changes from the pre-translocational (PRE) to the post-translocational (POST) state as the newly formed A-site-bound peptidyl-tRNA and P-site-bound deacylated tRNA move to the P and E sites, respectively. Catalyzes the coordinated movement of the two tRNA molecules, the mRNA and conformational changes in the ribosome. In Frankia alni (strain DSM 45986 / CECT 9034 / ACN14a), this protein is Elongation factor G.